A 522-amino-acid chain; its full sequence is ATP synthase subunit alpha (522 aa).

176-183 (GDRQTGKT) lines the ATP pocket.

It belongs to the ATPase alpha/beta chains family. As to quaternary structure, F-type ATPases have 2 components, CF(1) - the catalytic core - and CF(0) - the membrane proton channel. CF(1) has five subunits: alpha(3), beta(3), gamma(1), delta(1), epsilon(1). CF(0) has four main subunits: a(1), b(1), b'(1) and c(9-12).

It is found in the cell membrane. It catalyses the reaction ATP + H2O + 4 H(+)(in) = ADP + phosphate + 5 H(+)(out). Produces ATP from ADP in the presence of a proton gradient across the membrane. The alpha chain is a regulatory subunit. The sequence is that of ATP synthase subunit alpha from Chloroflexus aurantiacus (strain ATCC 29366 / DSM 635 / J-10-fl).